Here is a 1290-residue protein sequence, read N- to C-terminus: 1-phosphatidylinositol 4,5-bisphosphate phosphodiesterase gamma-1 (1290 aa).

Ala2 carries the N-acetylalanine modification. A PH 1 domain is found at Arg27–Glu142. The EF-hand domain maps to Gln152–Arg187. 5 residues coordinate Ca(2+): Asp165, Asn167, Glu169, Arg171, and Asp176. Residues Glu320 to Lys464 form the PI-PLC X-box domain. Catalysis depends on residues His335 and His380. A PH 2; first part domain is found at Ser489 to Thr523. Tyr506 bears the Phosphotyrosine mark. A disordered region spans residues Glu522–Ser546. SH2 domains follow at residues Trp550 to Val657 and Trp668 to Ile756. Tyr771 is modified (phosphotyrosine; by SYK). Position 775 is a phosphotyrosine (Tyr775). The residue at position 783 (Tyr783) is a Phosphotyrosine; by ITK, SYK and TXK. The region spanning Thr791–Asn851 is the SH3 domain. Positions Phe895–Gln931 constitute a PH 2; second part domain. Positions Leu953–Arg1070 constitute a PI-PLC Y-box domain. Tyr977 bears the Phosphotyrosine mark. One can recognise a C2 domain in the interval Asp1071 to Asn1194. Ser1221, Ser1227, Ser1233, and Ser1248 each carry phosphoserine. The residue at position 1253 (Tyr1253) is a Phosphotyrosine. Ser1263 carries the post-translational modification Phosphoserine. The interval Phe1271–Leu1290 is disordered.

As to quaternary structure, interacts with AGAP2 via its SH3 domain. Interacts (via SH2 domain) with RET. Interacts with FLT1 (tyrosine-phosphorylated). Interacts (via SH2 domain) with FGFR1, FGFR2, FGFR3 and FGFR4 (phosphorylated). Interacts with LAT (phosphorylated) upon TCR activation. Interacts (via SH3 domain) with the Pro-rich domain of TNK1. Associates with BLNK, VAV1, GRB2 and NCK1 in a B-cell antigen receptor-dependent fashion. Interacts with CBLB in activated T-cells; which inhibits phosphorylation. Interacts with SHB. Interacts (via SH3 domain) with the Arg/Gly-rich-flanked Pro-rich domains of KHDRBS1/SAM68. This interaction is selectively regulated by arginine methylation of KHDRBS1/SAM68. Interacts with INPP5D/SHIP1, THEMIS and CLNK. Interacts with AXL, FLT4 and KIT. Interacts with RALGPS1. Interacts (via the SH2 domains) with VIL1 (phosphorylated at C-terminus tyrosine phosphorylation sites). Interacts (via SH2 domain) with PDGFRA and PDGFRB (tyrosine phosphorylated). Interacts with PIP5K1C. Interacts with NTRK1 and NTRK2 (phosphorylated upon ligand-binding). Interacts with SYK; activates PLCG1. Interacts with GRB2, LAT and THEMIS upon TCR activation in thymocytes. Interacts with TESPA1; the association is increased with prolonged stimulation of the TCR and may facilitate the assembly of the LAT signalosome. Interacts (via C-terminal proline-rich domain (PRD)) with PLCG1 (via SH3 domain); this interaction leads to guanine nucleotide exchange from PlCG1 to DNM1 and enhances DNM1-dependent endocytosis. Ca(2+) is required as a cofactor. In terms of processing, ubiquitinated by CBLB in activated T-cells. Post-translationally, tyrosine phosphorylated in response to signaling via activated FLT3, KIT and PDGFRA. Tyrosine phosphorylated by activated FGFR1, FGFR2, FGFR3 and FGFR4. Tyrosine phosphorylated by activated FLT1 and KDR. Tyrosine phosphorylated by activated PDGFRB. The receptor-mediated activation of PLCG1 involves its phosphorylation by tyrosine kinases, in response to ligation of a variety of growth factor receptors and immune system receptors. For instance, SYK phosphorylates and activates PLCG1 in response to ligation of the B-cell receptor. May be dephosphorylated by PTPRJ. Phosphorylated by ITK and TXK on Tyr-783 upon TCR activation in T-cells.

Its subcellular location is the cell projection. It is found in the lamellipodium. The protein resides in the ruffle. The catalysed reaction is a 1,2-diacyl-sn-glycero-3-phospho-(1D-myo-inositol-4,5-bisphosphate) + H2O = 1D-myo-inositol 1,4,5-trisphosphate + a 1,2-diacyl-sn-glycerol + H(+). It catalyses the reaction a 1,2-diacyl-sn-glycero-3-phospho-(1D-myo-inositol) + H2O = 1D-myo-inositol 1-phosphate + a 1,2-diacyl-sn-glycerol + H(+). With respect to regulation, activated by phosphorylation on tyrosine residues. Mediates the production of the second messenger molecules diacylglycerol (DAG) and inositol 1,4,5-trisphosphate (IP3). Plays an important role in the regulation of intracellular signaling cascades. Becomes activated in response to ligand-mediated activation of receptor-type tyrosine kinases, such as PDGFRA, PDGFRB, EGFR, FGFR1, FGFR2, FGFR3 and FGFR4. Plays a role in actin reorganization and cell migration. Guanine nucleotide exchange factor that binds the GTPase DNM1 and catalyzes the dissociation of GDP, allowing a GTP molecule to bind in its place, therefore enhancing DNM1-dependent endocytosis. This Rattus norvegicus (Rat) protein is 1-phosphatidylinositol 4,5-bisphosphate phosphodiesterase gamma-1.